The chain runs to 157 residues: Protein Smg homolog (157 aa).

The protein belongs to the Smg family.

This chain is Protein Smg homolog, found in Xanthomonas campestris pv. campestris (strain 8004).